The primary structure comprises 426 residues: MELTSFHRSSLLFLISLTLIILPTTTTSIGVNYGQIGDNLPSPTDVIPLIKSIGATKVKLYDANPQILKAFSNTGIEFIIGLGNEYLSKMKDPSKALTWIKQNVTPFLPATNITCITIGNEILALNDSSLTTNLLPAMQGVHSALITAGLSDQISVTTAHSLSILKSSFPPSAGEFQPDLLDSLTPILEFHRKTDSPFLINAYPFFAYKGNPKEVPLDFVLFQPNQGIVDPATGFHYDNMLFAQIDAVYSALAAAGFKSLRVEISETGWPSKGDDDEVGATPENAKRYNGNLIKMMMSGKKTKTPLKPNNDLSIYVFALFNENLKPGPTSERNYGLFKPDGTQAYSLGFALNDVVRGASGGGTGGGNSSSGGGRDKSPVFPVSPVAPDSASTGYLAISASPVTGKRKGKGAILSLVVSMLLARHLL.

The first 30 residues, 1-30 (MELTSFHRSSLLFLISLTLIILPTTTTSIG), serve as a signal peptide directing secretion. Residue asparagine 112 is glycosylated (N-linked (GlcNAc...) asparagine). Glutamate 121 functions as the Proton donor in the catalytic mechanism. N-linked (GlcNAc...) asparagine glycosylation occurs at asparagine 126. Glutamate 266 acts as the Nucleophile in catalysis. The segment covering 360 to 372 (GGGTGGGNSSSGG) has biased composition (gly residues). A disordered region spans residues 360–389 (GGGTGGGNSSSGGGRDKSPVFPVSPVAPDS). A glycan (N-linked (GlcNAc...) asparagine) is linked at asparagine 367. Residue serine 398 is the site of GPI-anchor amidated serine attachment. Positions 399–426 (ASPVTGKRKGKGAILSLVVSMLLARHLL) are cleaved as a propeptide — removed in mature form.

This sequence belongs to the glycosyl hydrolase 17 family.

The protein localises to the secreted. It is found in the cell wall. The protein resides in the cell membrane. It catalyses the reaction Hydrolysis of (1-&gt;3)-beta-D-glucosidic linkages in (1-&gt;3)-beta-D-glucans.. The chain is Glucan endo-1,3-beta-glucosidase 11 from Arabidopsis thaliana (Mouse-ear cress).